Consider the following 202-residue polypeptide: dITP/XTP pyrophosphatase (202 aa).

7–12 (TTNEGK) is a substrate binding site. Residues E37 and D66 each coordinate Mg(2+). Residue D66 is the Proton acceptor of the active site. Residues S67, 155–158 (FGYD), K178, and 183–184 (HR) each bind substrate.

It belongs to the HAM1 NTPase family. As to quaternary structure, homodimer. Requires Mg(2+) as cofactor.

It catalyses the reaction XTP + H2O = XMP + diphosphate + H(+). The enzyme catalyses dITP + H2O = dIMP + diphosphate + H(+). It carries out the reaction ITP + H2O = IMP + diphosphate + H(+). Its function is as follows. Pyrophosphatase that catalyzes the hydrolysis of nucleoside triphosphates to their monophosphate derivatives, with a high preference for the non-canonical purine nucleotides XTP (xanthosine triphosphate), dITP (deoxyinosine triphosphate) and ITP. Seems to function as a house-cleaning enzyme that removes non-canonical purine nucleotides from the nucleotide pool, thus preventing their incorporation into DNA/RNA and avoiding chromosomal lesions. This Aquifex aeolicus (strain VF5) protein is dITP/XTP pyrophosphatase.